Here is a 294-residue protein sequence, read N- to C-terminus: Pyridoxal 5'-phosphate synthase subunit PdxS (294 aa).

Asp-24 contacts D-ribose 5-phosphate. Catalysis depends on Lys-81, which acts as the Schiff-base intermediate with D-ribose 5-phosphate. Gly-153 is a D-ribose 5-phosphate binding site. Arg-165 is a binding site for D-glyceraldehyde 3-phosphate. D-ribose 5-phosphate contacts are provided by residues Gly-214 and 235-236; that span reads GS.

Belongs to the PdxS/SNZ family. As to quaternary structure, in the presence of PdxT, forms a dodecamer of heterodimers.

The enzyme catalyses aldehydo-D-ribose 5-phosphate + D-glyceraldehyde 3-phosphate + L-glutamine = pyridoxal 5'-phosphate + L-glutamate + phosphate + 3 H2O + H(+). The protein operates within cofactor biosynthesis; pyridoxal 5'-phosphate biosynthesis. Functionally, catalyzes the formation of pyridoxal 5'-phosphate from ribose 5-phosphate (RBP), glyceraldehyde 3-phosphate (G3P) and ammonia. The ammonia is provided by the PdxT subunit. Can also use ribulose 5-phosphate and dihydroxyacetone phosphate as substrates, resulting from enzyme-catalyzed isomerization of RBP and G3P, respectively. The chain is Pyridoxal 5'-phosphate synthase subunit PdxS from Bacillus velezensis (strain DSM 23117 / BGSC 10A6 / LMG 26770 / FZB42) (Bacillus amyloliquefaciens subsp. plantarum).